Here is a 366-residue protein sequence, read N- to C-terminus: uncharacterized protein (366 aa).

The CP-type G domain occupies 59–222 (LNILHGIGET…LYDTPGIINN (164 aa)).

The protein belongs to the TRAFAC class YlqF/YawG GTPase family.

Functionally, binds GTP and GDP. This is an uncharacterized protein from Bacillus subtilis (strain 168).